Here is a 321-residue protein sequence, read N- to C-terminus: Low affinity immunoglobulin epsilon Fc receptor (321 aa).

Residues 1-21 (MEEGQYSEIEELPRRRCCRRG) lie on the Cytoplasmic side of the membrane. 2 S-palmitoyl cysteine lipidation sites follow: Cys-17 and Cys-18. Residues 22–47 (TQIVLLGLVTAALWAGLLTLLLLWHW) form a helical; Signal-anchor for type II membrane protein membrane-spanning segment. At 48–321 (DTTQSLKQLE…LPTPSAPLHS (274 aa)) the chain is on the extracellular side. Asn-63 is a glycosylation site (N-linked (GlcNAc...) asparagine). A disordered region spans residues 66 to 85 (QVSKNLESHHGDQMAQKSQS). 3 repeats span residues 69–89 (KNLESHHGDQMAQKSQSTQIS), 90–110 (QELEELRAEQQRLKSQDLELS), and 111–131 (WNLNGLQADLSSFKSQELNER). Intrachain disulfides connect Cys-160–Cys-288, Cys-163–Cys-174, Cys-191–Cys-282, and Cys-259–Cys-273. The C-type lectin domain occupies 162 to 284 (TCPEKWINFQ…RKLGAWVCDR (123 aa)). Residues Glu-249, Thr-251, Asn-269, and Asp-270 each contribute to the Ca(2+) site. The tract at residues 290–321 (PPASEGSAESMGPDSRPDPDGRLPTPSAPLHS) is disordered. The O-linked (Xyl...) (chondroitin sulfate) serine glycan is linked to Ser-296.

Homotrimer. Interacts (via C-type lectin domain) with IGHE (via CH3 region); this interaction regulates IgE homeostasis. Interacts (via the C-terminus) with CR2/CD21 (via Sushi domain 1 and 2). In terms of processing, N- and O-glycosylated. Post-translationally, the secreted form sCD23 is produced by ADAM10-mediated ectodomain shedding. As to expression, detected in urine (at protein level).

The protein resides in the cell membrane. It is found in the secreted. Low-affinity receptor for immunoglobulin E (IgE) and CR2/CD21. Has essential roles in the regulation of IgE production and in the differentiation of B cells. On B cells, initiates IgE-dependent antigen uptake and presentation to T cells. On macrophages, upon IgE binding and antigen cross-linking induces intracellular killing of parasites through activation of L-Arginine-nitric oxide pathway. This is Low affinity immunoglobulin epsilon Fc receptor (FCER2) from Homo sapiens (Human).